A 43-amino-acid polypeptide reads, in one-letter code: Potassium channel toxin gamma-KTx 4.4 (43 aa).

4 disulfide bridges follow: Cys-5/Cys-23, Cys-11/Cys-34, Cys-20/Cys-39, and Cys-24/Cys-41.

It belongs to the ergtoxin family. Gamma-KTx 4 subfamily. As to expression, expressed by the venom gland.

It is found in the secreted. Its function is as follows. Reversibly blocks Kv11/ERG potassium channels. The polypeptide is Potassium channel toxin gamma-KTx 4.4 (Centruroides exilicauda (Bark scorpion)).